The following is a 913-amino-acid chain: Alanine--tRNA ligase (913 aa).

Histidine 600, histidine 604, cysteine 703, and histidine 707 together coordinate Zn(2+).

Belongs to the class-II aminoacyl-tRNA synthetase family. The cofactor is Zn(2+).

The protein resides in the cytoplasm. It carries out the reaction tRNA(Ala) + L-alanine + ATP = L-alanyl-tRNA(Ala) + AMP + diphosphate. Catalyzes the attachment of alanine to tRNA(Ala) in a two-step reaction: alanine is first activated by ATP to form Ala-AMP and then transferred to the acceptor end of tRNA(Ala). Also edits incorrectly charged Ser-tRNA(Ala) and Gly-tRNA(Ala) via its editing domain. This Methanothrix thermoacetophila (strain DSM 6194 / JCM 14653 / NBRC 101360 / PT) (Methanosaeta thermophila) protein is Alanine--tRNA ligase.